The sequence spans 240 residues: Regulatory protein SdiA (240 aa).

The 66-residue stretch at 173–238 (VMTPEMNFSK…QVACYAAATG (66 aa)) folds into the HTH luxR-type domain. Positions 197-216 (SAEIAMILSISENTVNFHQK) form a DNA-binding region, H-T-H motif.

In terms of biological role, activates cell division by specifically increasing transcription from one of the two promoters that lie immediately upstream of the ftsQAZ gene cluster. Activates ydiV expression in response to extracellular autoinducer AI-1 (Vibrio fischeri autoinducer oxoC6). The chain is Regulatory protein SdiA (sdiA) from Escherichia coli (strain K12).